We begin with the raw amino-acid sequence, 63 residues long: Large ribosomal subunit protein uL29 (63 aa).

It belongs to the universal ribosomal protein uL29 family.

The protein is Large ribosomal subunit protein uL29 of Hahella chejuensis (strain KCTC 2396).